We begin with the raw amino-acid sequence, 81 residues long: UPF0180 protein RBAM_013970 (81 aa).

The protein belongs to the UPF0180 family.

This chain is UPF0180 protein RBAM_013970, found in Bacillus velezensis (strain DSM 23117 / BGSC 10A6 / LMG 26770 / FZB42) (Bacillus amyloliquefaciens subsp. plantarum).